A 142-amino-acid chain; its full sequence is Cytochrome c-type biogenesis protein CcmE (142 aa).

Over 1-2 the chain is Cytoplasmic; the sequence is MK. The helical; Signal-anchor for type II membrane protein transmembrane segment at 3-23 threads the bilayer; the sequence is GKYLLGILVILGALGYMVFGG. Residues 24–142 lie on the Periplasmic side of the membrane; that stretch reads LGRNLVYFLT…EVRKLIEEAQ (119 aa). Heme is bound by residues H118 and Y122.

The protein belongs to the CcmE/CycJ family.

It is found in the cell inner membrane. Its function is as follows. Heme chaperone required for the biogenesis of c-type cytochromes. Transiently binds heme delivered by CcmC and transfers the heme to apo-cytochromes in a process facilitated by CcmF and CcmH. The chain is Cytochrome c-type biogenesis protein CcmE from Thermus thermophilus (strain ATCC 27634 / DSM 579 / HB8).